A 130-amino-acid polypeptide reads, in one-letter code: Putative F-box protein At1g77880 (130 aa).

One can recognise an F-box domain in the interval 18-64; that stretch reads KVSIPYLPDDLLLNCLARISRLYYPTLSLVSKRFRSLLASTELYETR.

The polypeptide is Putative F-box protein At1g77880 (Arabidopsis thaliana (Mouse-ear cress)).